Here is a 227-residue protein sequence, read N- to C-terminus: MTAIAPVITIDGPSGAGKGTLCKAMAEALQWHLLDSGAIYRVLALAALHHHVDVASEDALVPLASHLDVRFVSTNGNLEVILEGEDVSGEIRTQEVANAASQVAAFPRVREALLRRQRAFRELPGLIADGRDMGTVVFPDAPVKIFLDASSEERAHRRMLQLQEKGFSVNFERLLAEIKERDDRDRNRAVAPLVPAADALVLDSTTLSIEQLIEKALQYARQKLALA.

Glycine 12–threonine 20 lines the ATP pocket.

Belongs to the cytidylate kinase family. Type 1 subfamily.

It localises to the cytoplasm. The catalysed reaction is CMP + ATP = CDP + ADP. It catalyses the reaction dCMP + ATP = dCDP + ADP. The polypeptide is Cytidylate kinase (Shigella flexneri).